The sequence spans 226 residues: Urease accessory protein UreF (226 aa).

This sequence belongs to the UreF family. As to quaternary structure, ureD, UreF and UreG form a complex that acts as a GTP-hydrolysis-dependent molecular chaperone, activating the urease apoprotein by helping to assemble the nickel containing metallocenter of UreC. The UreE protein probably delivers the nickel.

The protein resides in the cytoplasm. Functionally, required for maturation of urease via the functional incorporation of the urease nickel metallocenter. The chain is Urease accessory protein UreF from Burkholderia vietnamiensis (strain G4 / LMG 22486) (Burkholderia cepacia (strain R1808)).